Here is a 191-residue protein sequence, read N- to C-terminus: 3-isopropylmalate dehydratase small subunit (191 aa).

Belongs to the LeuD family. LeuD type 1 subfamily. Heterodimer of LeuC and LeuD.

It carries out the reaction (2R,3S)-3-isopropylmalate = (2S)-2-isopropylmalate. It participates in amino-acid biosynthesis; L-leucine biosynthesis; L-leucine from 3-methyl-2-oxobutanoate: step 2/4. Its function is as follows. Catalyzes the isomerization between 2-isopropylmalate and 3-isopropylmalate, via the formation of 2-isopropylmaleate. The protein is 3-isopropylmalate dehydratase small subunit of Solibacter usitatus (strain Ellin6076).